The primary structure comprises 489 residues: Cytochrome P450 monooxygenase trt6 (489 aa).

The helical transmembrane segment at 10-30 (SLWSFGLWILVILSPVLFFAS) threads the bilayer. N-linked (GlcNAc...) asparagine glycans are attached at residues N364 and N407. C430 provides a ligand contact to heme.

This sequence belongs to the cytochrome P450 family. Heme is required as a cofactor.

Its subcellular location is the membrane. Its pathway is secondary metabolite biosynthesis; terpenoid biosynthesis. In terms of biological role, cytochrome P450 monooxygenase; part of the gene cluster that mediates the biosynthesis of terretonin, a fungal meroterpenoid that acts as a mycotoxin. The first step of the pathway is the synthesis of 3,5-dimethylorsellinic acid (DMOA) by the polyketide synthase trt4. DMOA is then prenylated into farnesyl-DMOA by the polyprenyl transferase trt2. Methylation by the methyltransferase trt5 then leads to farnesyl-DMOA methyl ester which is further subject to epoxidation by the FAD-dependent monooxygenase trt8 to yield epoxyfarnesyl-DMOA methyl ester. Cyclization of epoxyfarnesyl-DMOA methyl ester by the terpene cyclase trt1 leads to a tetracycle intermediate which is in turn converted to preterretonin. Dehydrogenase trt9 comes next to transform preterretonin to preterrenoid. The FAD-dependent monooxygenase trt3 is then required for the C-hydroxylation at C16 of preterrenoid to yield terrenoid. The cytochrome P450 trt6 catalyzes three successive oxidations to transform terrenoid into an unstable intermediate, which then undergoes the D-ring expansion and unusual rearrangement of the methoxy group to afford the core skeleton of terretonin. Trt14 catalyzes the D-ring expansion of terretonin involving intramolecular methoxy rearrangement as well as the hydrolysis of the expanded D-ring and the methyl ester moiety. Finally, the nonheme iron-dependent dioxygenase trt7 accomplishes the last two oxidation reactions steps to complete the biosynthesis of terretonin. Terretonin C is produced via spontaneous decarboxylation of the terretonin precursor. Another shunt product of the terretonin biosynthesis is dihydrofarnesyl-DMOA, derived from epoxyfarnesyl-DMOA through hydrolysis of the epoxide. The protein is Cytochrome P450 monooxygenase trt6 of Aspergillus terreus (strain NIH 2624 / FGSC A1156).